Consider the following 104-residue polypeptide: Small ribosomal subunit protein uS10 (104 aa).

This sequence belongs to the universal ribosomal protein uS10 family. As to quaternary structure, part of the 30S ribosomal subunit.

Involved in the binding of tRNA to the ribosomes. The sequence is that of Small ribosomal subunit protein uS10 from Hydrogenobaculum sp. (strain Y04AAS1).